The primary structure comprises 512 residues: Lysine--tRNA ligase (512 aa).

Residues Glu408 and Glu415 each contribute to the Mg(2+) site.

The protein belongs to the class-II aminoacyl-tRNA synthetase family. As to quaternary structure, homodimer. Mg(2+) serves as cofactor.

Its subcellular location is the cytoplasm. It catalyses the reaction tRNA(Lys) + L-lysine + ATP = L-lysyl-tRNA(Lys) + AMP + diphosphate. The protein is Lysine--tRNA ligase of Prochlorococcus marinus (strain MIT 9515).